A 107-amino-acid polypeptide reads, in one-letter code: Ferredoxin (107 aa).

4Fe-4S ferredoxin-type domains lie at 2 to 30 (TYVV…YEGE) and 31 to 60 (FMLV…PETP). Residues Cys-9 and Cys-17 each contribute to the [3Fe-4S] cluster site. Residues Cys-21, Cys-40, Cys-43, and Cys-46 each contribute to the [4Fe-4S] cluster site. Cys-50 lines the [3Fe-4S] cluster pocket.

[4Fe-4S] cluster serves as cofactor. The cofactor is [3Fe-4S] cluster.

In terms of biological role, ferredoxins are iron-sulfur proteins that transfer electrons in a wide variety of metabolic reactions. In Rickettsia bellii (strain RML369-C), this protein is Ferredoxin (fdxA).